Consider the following 125-residue polypeptide: Holo-[acyl-carrier-protein] synthase (125 aa).

Aspartate 7 and glutamate 56 together coordinate Mg(2+).

The protein belongs to the P-Pant transferase superfamily. AcpS family. The cofactor is Mg(2+).

It is found in the cytoplasm. It catalyses the reaction apo-[ACP] + CoA = holo-[ACP] + adenosine 3',5'-bisphosphate + H(+). Functionally, transfers the 4'-phosphopantetheine moiety from coenzyme A to a Ser of acyl-carrier-protein. The chain is Holo-[acyl-carrier-protein] synthase from Chlamydia muridarum (strain MoPn / Nigg).